A 720-amino-acid polypeptide reads, in one-letter code: Exocyst complex component 7 (720 aa).

Coiled coils occupy residues 5-34 and 63-83; these read EDAS…SLEK and VHKQ…TLSN. The residue at position 133 (S133) is a Phosphoserine. The interval 249–268 is disordered; sequence SPAVQTKRKETPTKKAPKRP.

The protein belongs to the EXO70 family.

Its subcellular location is the cytoplasm. The protein resides in the cytosol. It localises to the cell membrane. The protein localises to the midbody. It is found in the midbody ring. Functionally, component of the exocyst complex involved in the docking of exocytic vesicles with fusion sites on the plasma membrane. It is required for neuron survival and plays an essential role in telencephalon development. The chain is Exocyst complex component 7 (exoc7) from Danio rerio (Zebrafish).